The chain runs to 199 residues: Recombination protein RecR (199 aa).

Residues 58–73 form a C4-type zinc finger; the sequence is CRRCFNLTEGEECDIC. Positions 81-176 constitute a Toprim domain; it reads SVICVVEDPY…RVTALASGLP (96 aa).

It belongs to the RecR family.

Its function is as follows. May play a role in DNA repair. It seems to be involved in an RecBC-independent recombinational process of DNA repair. It may act with RecF and RecO. The sequence is that of Recombination protein RecR from Rubrobacter xylanophilus (strain DSM 9941 / JCM 11954 / NBRC 16129 / PRD-1).